Here is a 236-residue protein sequence, read N- to C-terminus: Phosphoribosylaminoimidazole-succinocarboxamide synthase (236 aa).

It belongs to the SAICAR synthetase family.

The enzyme catalyses 5-amino-1-(5-phospho-D-ribosyl)imidazole-4-carboxylate + L-aspartate + ATP = (2S)-2-[5-amino-1-(5-phospho-beta-D-ribosyl)imidazole-4-carboxamido]succinate + ADP + phosphate + 2 H(+). It participates in purine metabolism; IMP biosynthesis via de novo pathway; 5-amino-1-(5-phospho-D-ribosyl)imidazole-4-carboxamide from 5-amino-1-(5-phospho-D-ribosyl)imidazole-4-carboxylate: step 1/2. The protein is Phosphoribosylaminoimidazole-succinocarboxamide synthase of Pseudomonas syringae pv. syringae (strain B728a).